A 1149-amino-acid chain; its full sequence is Probable phospholipid-transporting ATPase IA (1149 aa).

The Cytoplasmic portion of the chain corresponds to 1 to 65 (MPTMRRTVSE…TAKYNIITFL (65 aa)). Serine 25 carries the phosphoserine modification. Residue threonine 28 is modified to Phosphothreonine. At serine 29 the chain carries Phosphoserine. Residues 66-86 (PRFLYSQFRRAANSFFLFIAL) traverse the membrane as a helical segment. Residues 87 to 92 (LQQIPD) are Extracellular-facing. The helical transmembrane segment at 93-115 (VSPTGRYTTLVPLLFILAVAAIK) threads the bilayer. Residues 116–297 (EIIEDIKRHK…SNVERITNVQ (182 aa)) lie on the Cytoplasmic side of the membrane. The chain crosses the membrane as a helical span at residues 298–319 (ILILFCILIAMSLVCSVGSAIW). The Extracellular portion of the chain corresponds to 320 to 344 (NRRHSGRDWYLNLNYGGANNFGLNF). A helical transmembrane segment spans residues 345–366 (LTFIILFNNLIPISLLVTLEVV). Over 367–842 (KFTQAYFINW…GAWNYNRGSK (476 aa)) the chain is Cytoplasmic. Aspartate 409 serves as the catalytic 4-aspartylphosphate intermediate. ATP-binding positions include aspartate 409, lysine 410, threonine 411, glutamate 493, phenylalanine 534, lysine 557, arginine 590, threonine 670, glycine 671, aspartate 672, 726–733 (ALIIDGKT), arginine 760, and lysine 766. Aspartate 409 serves as a coordination point for Mg(2+). Threonine 411 is a binding site for Mg(2+). A Mg(2+)-binding site is contributed by aspartate 786. Positions 789 and 790 each coordinate ATP. Aspartate 790 contacts Mg(2+). A helical transmembrane segment spans residues 843–863 (CILYCFYKNIVLYIIEIWFAF). Topologically, residues 864–875 (VNGFSGQILFER) are extracellular. The helical transmembrane segment at 876–895 (WCIGLYNVMFTAMPPLTLGI) threads the bilayer. Topologically, residues 896–925 (FERSCRKEYMLKYPELYKTSQNALDFNTKV) are cytoplasmic. Residues 926–947 (FWVHCLNGLFHSVILFWFPLKA) form a helical membrane-spanning segment. Residues 948–961 (LQYGTVFENGRTSD) are Extracellular-facing. The chain crosses the membrane as a helical span at residues 962 to 984 (YLLLGNFVYTFVVITVCLKAGLE). Residues 985–990 (TSYWTW) lie on the Cytoplasmic side of the membrane. A helical membrane pass occupies residues 991 to 1011 (FSHIAIWGSIALWVVFFGIYS). Residues 1012-1029 (SLWPAVPMAPDMSGEAAM) lie on the Extracellular side of the membrane. Residues 1030 to 1055 (LFSSGVFWMGLLFIPVASLLLDVVYK) form a helical membrane-spanning segment. Residues 1056–1149 (VIKRTAFKTL…DTTKQRPDEW (94 aa)) are Cytoplasmic-facing. 1080-1087 (GAVVLGKS) serves as a coordination point for ATP. Position 1111 is a phosphoserine (serine 1111).

This sequence belongs to the cation transport ATPase (P-type) (TC 3.A.3) family. Type IV subfamily. Component of a P4-ATPase flippase complex which consists of a catalytic alpha subunit and an accessory beta subunit. Interacts with TMEM30A to form a flippase complex; this complex forms an intermediate phosphoenzyme. Interacts with TMEM30B; this interaction is reported conflictingly. It depends on Mg(2+) as a cofactor. In terms of processing, cleaved by calpain in a caspase- and calcium influx-dependent manner during platelet apoptosis leading to a 100 kDa polypeptide. Kidney.

It is found in the cytoplasmic vesicle. It localises to the secretory vesicle. The protein localises to the chromaffin granule membrane. Its subcellular location is the cytoplasmic granule. The protein resides in the cell membrane. It is found in the endoplasmic reticulum. It localises to the golgi apparatus. The catalysed reaction is ATP + H2O + phospholipidSide 1 = ADP + phosphate + phospholipidSide 2.. It catalyses the reaction a 1,2-diacyl-sn-glycero-3-phospho-L-serine(out) + ATP + H2O = a 1,2-diacyl-sn-glycero-3-phospho-L-serine(in) + ADP + phosphate + H(+). Functionally, catalytic component of a P4-ATPase flippase complex which catalyzes the hydrolysis of ATP coupled to the transport of aminophospholipids from the outer to the inner leaflet of various membranes and ensures the maintenance of asymmetric distribution of phospholipids. Phospholipid translocation also seems to be implicated in vesicle formation and in uptake of lipid signaling molecules. In vitro, its ATPase activity is selectively and stereospecifically stimulated by phosphatidylserine (PS). The flippase complex ATP8A1:TMEM30A seems to play a role in regulation of cell migration probably involving flippase-mediated translocation of phosphatidylethanolamine (PE) at the cell membrane. Acts as aminophospholipid translocase at the cell membrane in neuronal cells. This chain is Probable phospholipid-transporting ATPase IA, found in Bos taurus (Bovine).